The chain runs to 372 residues: Chorismate synthase (372 aa).

An NADP(+)-binding site is contributed by Arg-48. Residues 131–133, 243–244, Gly-288, 303–307, and Arg-329 each bind FMN; these read RSS, NA, and KPTSS.

This sequence belongs to the chorismate synthase family. Homotetramer. It depends on FMNH2 as a cofactor.

It carries out the reaction 5-O-(1-carboxyvinyl)-3-phosphoshikimate = chorismate + phosphate. The protein operates within metabolic intermediate biosynthesis; chorismate biosynthesis; chorismate from D-erythrose 4-phosphate and phosphoenolpyruvate: step 7/7. Catalyzes the anti-1,4-elimination of the C-3 phosphate and the C-6 proR hydrogen from 5-enolpyruvylshikimate-3-phosphate (EPSP) to yield chorismate, which is the branch point compound that serves as the starting substrate for the three terminal pathways of aromatic amino acid biosynthesis. This reaction introduces a second double bond into the aromatic ring system. In Caulobacter vibrioides (strain ATCC 19089 / CIP 103742 / CB 15) (Caulobacter crescentus), this protein is Chorismate synthase.